We begin with the raw amino-acid sequence, 217 residues long: Non-structural protein NS3 (217 aa).

It belongs to the orbivirus NS3 family.

Its function is as follows. May play a role in the release of virions from infected cells. This chain is Non-structural protein NS3 (Segment-10), found in Camelus dromedarius (Dromedary).